The following is a 557-amino-acid chain: Probable protein kinase UbiB (557 aa).

Residues Ser121–Ala509 enclose the Protein kinase domain. ATP contacts are provided by residues Leu127 to Val135 and Lys154. The active-site Proton acceptor is the Asp289. 2 helical membrane passes run Val506 to His526 and Val535 to Leu555.

Belongs to the ABC1 family. UbiB subfamily.

The protein localises to the cell inner membrane. Its pathway is cofactor biosynthesis; ubiquinone biosynthesis [regulation]. Its function is as follows. Is probably a protein kinase regulator of UbiI activity which is involved in aerobic coenzyme Q (ubiquinone) biosynthesis. The sequence is that of Probable protein kinase UbiB from Xanthomonas axonopodis pv. citri (strain 306).